We begin with the raw amino-acid sequence, 3637 residues long: Replicase polyprotein 1ab (3637 aa).

The C4-type; atypical zinc-finger motif lies at 8-28; it reads CLCTPNARVFWERGQVYCTRC. A Peptidase C31 domain is found at 69–181; that stretch reads ECRPGGMCWL…KGLCPFADAR (113 aa). Residues 69 to 183 form a PCP1-alpha region; sequence ECRPGGMCWL…LCPFADARAN (115 aa). Residues Cys76 and His147 each act as for Nsp1-alpha papain-like cysteine proteinase activity in the active site. The segment at 262–380 is PCP1-beta; it reads RDTKFSKCWE…KFRFQTRKYY (119 aa). Positions 262 to 381 constitute a Peptidase C32 domain; it reads RDTKFSKCWE…FRFQTRKYYG (120 aa). Active-site for Nsp1-beta papain-like cysteine proteinase activity residues include Cys269 and His340. In terms of domain architecture, Peptidase C33 spans 381 to 486; that stretch reads GYSPPGDGAC…RGVCGECEMG (106 aa). Active-site for Nsp2 cysteine proteinase activity residues include Cys390 and His456. Disordered stretches follow at residues 676–743 and 865–899; these read CKPK…AALK and QQKTSGGCGEREFKDVGRKSGAERTPSKRDLGVSL. Residues 678–689 are compositionally biased toward basic residues; it reads PKRKRSRKKKTR. Composition is skewed to basic and acidic residues over residues 714–727 and 873–895; these read DTRETCASEKKAEK and GEREFKDVGRKSGAERTPSKRDL. A run of 7 helical transmembrane segments spans residues 940–960, 981–1001, 1083–1103, 1287–1307, 1362–1382, 1390–1410, and 1423–1443; these read WLNHQVFVLSSHLLAVWSFIF, VLLCFYLPAIGFMTLVGCVFG, FYFLRLMVLLDLGLVFLAVAL, IADFVCLGLYVLLNFLLSAWL, ALMVAIMATVAIFFAKISLLV, CLLMYAFPSLSIAAFGFPFVL, and VQFFLLAVNVWAGVASVVVLI. An HD1 region spans residues 979–1103; sequence CCVLLCFYLP…LGLVFLAVAL (125 aa). The tract at residues 1287-1446 is HD2; the sequence is IADFVCLGLY…ASVVVLISSW (160 aa). The Peptidase S32 domain occupies 1511 to 1712; sequence GSLRTRGCAK…AVVESLPALE (202 aa). Residues His1549, Asp1574, and Ser1626 each act as charge relay system; for 3C-like serine proteinase activity in the active site. Helical transmembrane passes span 1735–1755, 1761–1781, 1801–1821, 1824–1844, and 1853–1873; these read DVPVIRIAFFFLNEILPVMLA, FALSLFFCVHWLFCSSVAVAF, LVIAALNRPCGPFGFSLLGQL, CCLMLCLLDIELQLLGCLYLG, and EIFFHPTGQFMFLPLFLSLFK. The HD3 stretch occupies residues 1735–1872; the sequence is DVPVIRIAFF…MFLPLFLSLF (138 aa). The NiRAN domain occupies 2214–2372; it reads SLNGLQQASA…LPYKLHPVRG (159 aa). The RdRp catalytic domain occupies 2611-2745; it reads GRCLEADLAS…YDESSELPNY (135 aa). Residues 2865–2928 enclose the AV ZBD domain; sequence KKKCRTCAHC…SPVMSLNTEL (64 aa). Zn(2+) is bound by residues Cys2871, Cys2874, Cys2884, Cys2889, His2892, His2894, His2896, His2898, Cys2905, His2907, Cys2914, and Cys2917. One can recognise a (+)RNA virus helicase ATP-binding domain in the interval 2985 to 3137; that stretch reads QVMKVAQTCA…AFALMLGRQL (153 aa). 3013–3020 contacts ATP; the sequence is GAPGTGKT. Residues 3138–3269 form the (+)RNA virus helicase C-terminal domain; it reads IEVFRFGPSI…CGEQPMMISE (132 aa). The 97-residue stretch at 3293 to 3389 folds into the AV-Nsp11N/CoV-Nsp15M domain; that stretch reads EGTASPLPQV…LTKFLKGKPV (97 aa). The NendoU domain occupies 3391–3513; the sequence is LPDSLMSTGR…MVWKDATAYF (123 aa). Catalysis depends on residues His3422, His3437, and Lys3466.

The protein belongs to the arteriviridae polyprotein family. Specific enzymatic cleavages in vivo by its own proteases yield mature proteins. There are two alternative pathways for processing. Either nsp4-5 is cleaved, which represents the major pathway or the nsp5-6 and nsp6-7 are processed, which represents the minor pathway. The major pathway occurs when nsp2 acts as a cofactor for nsp4.

It localises to the host membrane. It is found in the host cytoplasm. The protein localises to the host perinuclear region. The catalysed reaction is RNA(n) + a ribonucleoside 5'-triphosphate = RNA(n+1) + diphosphate. The enzyme catalyses ATP + H2O = ADP + phosphate + H(+). It catalyses the reaction uridylyl-uridylyl-ribonucleotide-RNA = a 3'-end uridylyl-2',3'-cyclophospho-uridine-RNA + a 5'-end dephospho-ribonucleoside-RNA. Functionally, the replicase polyprotein 1ab is a multifunctional protein: it contains the activities necessary for the transcription of negative stranded RNA, leader RNA, subgenomic mRNAs and progeny virion RNA as well as proteinases responsible for the cleavage of the polyprotein into functional products. The Nsp1 chain is essential for viral subgenomic mRNA synthesis. In terms of biological role, the 3C-like serine proteinase chain is responsible for the majority of cleavages as it cleaves the C-terminus of the polyprotein. Its function is as follows. The helicase chain, which contains a zinc finger structure, displays RNA and DNA duplex-unwinding activities with 5' to 3' polarity. Functionally, plays a role in viral transcription/replication and prevents the simultaneous activation of host cell dsRNA sensors, such as MDA5/IFIH1, OAS, and PKR. Acts by degrading the 5'-polyuridines generated during replication of the poly(A) region of viral genomic and subgenomic RNAs. Catalyzes a two-step reaction in which a 2'3'-cyclic phosphate (2'3'-cP) is first generated by 2'-O transesterification, which is then hydrolyzed to a 3'-phosphate (3'-P). If not degraded, poly(U) RNA would hybridize with poly(A) RNA tails and activate host dsRNA sensors. This chain is Replicase polyprotein 1ab (rep), found in Mus musculus domesticus (western European house mouse).